The sequence spans 67 residues: Conotoxin Cl6.10 (67 aa).

Residues 1–24 form the signal peptide; the sequence is MKLTCVLIAAVLLLAVCQLDSADA. Residues 25 to 37 constitute a propeptide that is removed on maturation; it reads TAYMRKDPSLRSP. 3 cysteine pairs are disulfide-bonded: Cys-43–Cys-57, Cys-50–Cys-61, and Cys-56–Cys-65.

Belongs to the conotoxin O1 superfamily. As to expression, expressed by the venom duct.

Its subcellular location is the secreted. This chain is Conotoxin Cl6.10, found in Californiconus californicus (California cone).